A 349-amino-acid polypeptide reads, in one-letter code: Phosphoribosylformylglycinamidine cyclo-ligase (349 aa).

Belongs to the AIR synthase family.

The protein resides in the cytoplasm. It catalyses the reaction 2-formamido-N(1)-(5-O-phospho-beta-D-ribosyl)acetamidine + ATP = 5-amino-1-(5-phospho-beta-D-ribosyl)imidazole + ADP + phosphate + H(+). It functions in the pathway purine metabolism; IMP biosynthesis via de novo pathway; 5-amino-1-(5-phospho-D-ribosyl)imidazole from N(2)-formyl-N(1)-(5-phospho-D-ribosyl)glycinamide: step 2/2. This Lactobacillus helveticus (strain DPC 4571) protein is Phosphoribosylformylglycinamidine cyclo-ligase.